Reading from the N-terminus, the 216-residue chain is Cytochrome c biogenesis ATP-binding export protein CcmA (216 aa).

The region spanning 11 to 216 (LSANELTCIR…RKITLDYRFV (206 aa)) is the ABC transporter domain. 43-50 (GPNGAGKT) contributes to the ATP binding site.

The protein belongs to the ABC transporter superfamily. CcmA exporter (TC 3.A.1.107) family. As to quaternary structure, the complex is composed of two ATP-binding proteins (CcmA) and two transmembrane proteins (CcmB).

The protein resides in the cell inner membrane. The catalysed reaction is heme b(in) + ATP + H2O = heme b(out) + ADP + phosphate + H(+). In terms of biological role, part of the ABC transporter complex CcmAB involved in the biogenesis of c-type cytochromes; once thought to export heme, this seems not to be the case, but its exact role is uncertain. Responsible for energy coupling to the transport system. The polypeptide is Cytochrome c biogenesis ATP-binding export protein CcmA (Shewanella frigidimarina (strain NCIMB 400)).